A 551-amino-acid polypeptide reads, in one-letter code: MKKMTAMLFSMAVGLNAVSMTAMADAPKEQETDVLLIGGGIMSATLGTYLQELQPDWSMTMVERLDGVAKESSNGWNNAGTGHSALMELNYTPQKKDGSISIEKAVEINEAFQVSRQFWSHQVNSGVMHDPHSFINTVPHMSFVWGDQNVNFLRARYAALQQSSLFRGMKFSEDHAQIKEWAPLVMEGRDPNQKVAATRTEIGTDVNYGEITHQLVASLQKKDDFHLQLSTEVRGFKRNADNSWSVTVADLKNNEAEHVIKAKFVFIGAGGAALKLLQETGIPEADDYAGFPVGGQFLVSENPEVVNRHLAKVYGQASVGAPPMSVPHIDTRMLDGKRVVLFGPFATFSTKFLKNGSLWDLLSSTTTSNFMPMVDVGMDNFDLVKYLMSQVMLSDDDRFAALQEYYPQAKKEDWRLWQAGQRVQIIKRDPKEGGVLRLGTEVVSDKEGTIAALLGASPGASTAAPIMLHLMEKVFKDKVASPEWQAKLKTIIPSYGTKLNGNVAATEQELEFTSRVLQLKYEKPQTAAAAPQAQPQLKPQPDAKPVADIAL.

Low complexity predominate over residues Gln525 to Lys544. The interval Gln525–Leu551 is disordered.

It belongs to the MQO family. The cofactor is FAD.

The enzyme catalyses (S)-malate + a quinone = a quinol + oxaloacetate. It functions in the pathway carbohydrate metabolism; tricarboxylic acid cycle; oxaloacetate from (S)-malate (quinone route): step 1/1. This is Probable malate:quinone oxidoreductase from Enterobacter sp. (strain 638).